We begin with the raw amino-acid sequence, 172 residues long: MKRLLVVGRFQPPHLGHLHTIKWALGRAEEVIVVVGSAQESYTLENPMTAGERVHALRLMLEELDDWCRRLMIAPVPDIAMNKVWVQYLKMLLPPFDGVVSGNELVLMLFEDMGLAALRPPMFRRGECSGTRIRRLMASGESGWEDCLHPQVRRYVEEIGLPERLRRLQEMR.

This sequence belongs to the archaeal NMN adenylyltransferase family.

The protein localises to the cytoplasm. It catalyses the reaction beta-nicotinamide D-ribonucleotide + ATP + H(+) = diphosphate + NAD(+). The protein operates within cofactor biosynthesis; NAD(+) biosynthesis; NAD(+) from nicotinamide D-ribonucleotide: step 1/1. The polypeptide is Nicotinamide-nucleotide adenylyltransferase (Aeropyrum pernix (strain ATCC 700893 / DSM 11879 / JCM 9820 / NBRC 100138 / K1)).